Consider the following 181-residue polypeptide: Oligoribonuclease (181 aa).

In terms of domain architecture, Exonuclease spans 8-171 (LIWVDLEMTG…DDIRESIAEL (164 aa)). The active site involves Y129.

The protein belongs to the oligoribonuclease family.

It localises to the cytoplasm. Functionally, 3'-to-5' exoribonuclease specific for small oligoribonucleotides. The sequence is that of Oligoribonuclease from Vibrio campbellii (strain ATCC BAA-1116).